We begin with the raw amino-acid sequence, 43 residues long: Omega-agatoxin-Aa3c (43 aa).

3 cysteine pairs are disulfide-bonded: Cys-2–Cys-19, Cys-9–Cys-25, and Cys-27–Cys-38.

The protein belongs to the neurotoxin 04 (omega-agtx) family. 03 (type II/III omega-agtx) subfamily. In terms of tissue distribution, expressed by the venom gland.

It is found in the secreted. Omega-agatoxins are antagonists of voltage-gated calcium channels (Cav). The protein is Omega-agatoxin-Aa3c of Agelenopsis aperta (North American funnel-web spider).